The primary structure comprises 190 residues: Imidazoleglycerol-phosphate dehydratase (190 aa).

Belongs to the imidazoleglycerol-phosphate dehydratase family.

The protein localises to the cytoplasm. The enzyme catalyses D-erythro-1-(imidazol-4-yl)glycerol 3-phosphate = 3-(imidazol-4-yl)-2-oxopropyl phosphate + H2O. The protein operates within amino-acid biosynthesis; L-histidine biosynthesis; L-histidine from 5-phospho-alpha-D-ribose 1-diphosphate: step 6/9. The protein is Imidazoleglycerol-phosphate dehydratase of Wolinella succinogenes (strain ATCC 29543 / DSM 1740 / CCUG 13145 / JCM 31913 / LMG 7466 / NCTC 11488 / FDC 602W) (Vibrio succinogenes).